We begin with the raw amino-acid sequence, 186 residues long: TATA-box-binding protein 2 (186 aa).

2 repeat units span residues 10–86 and 101–179. Glycyl lysine isopeptide (Lys-Gly) (interchain with G-Cter in SAMP2) cross-links involve residues Lys-53 and Lys-63.

Belongs to the TBP family.

Functionally, general factor that plays a role in the activation of archaeal genes transcribed by RNA polymerase. Binds specifically to the TATA box promoter element which lies close to the position of transcription initiation. This chain is TATA-box-binding protein 2 (tbp2), found in Haloferax volcanii (strain ATCC 29605 / DSM 3757 / JCM 8879 / NBRC 14742 / NCIMB 2012 / VKM B-1768 / DS2) (Halobacterium volcanii).